An 88-amino-acid polypeptide reads, in one-letter code: UPF0250 protein swp_3927 (88 aa).

Belongs to the UPF0250 family.

The chain is UPF0250 protein swp_3927 from Shewanella piezotolerans (strain WP3 / JCM 13877).